A 355-amino-acid polypeptide reads, in one-letter code: Protein RecA (355 aa).

67–74 (GPESSGKT) lines the ATP pocket.

Belongs to the RecA family.

The protein resides in the cytoplasm. Functionally, can catalyze the hydrolysis of ATP in the presence of single-stranded DNA, the ATP-dependent uptake of single-stranded DNA by duplex DNA, and the ATP-dependent hybridization of homologous single-stranded DNAs. It interacts with LexA causing its activation and leading to its autocatalytic cleavage. The chain is Protein RecA from Shewanella amazonensis (strain ATCC BAA-1098 / SB2B).